We begin with the raw amino-acid sequence, 90 residues long: Small ribosomal subunit protein bS20 (90 aa).

The disordered stretch occupies residues 1-28 (MPNTSSASKRLRQNEKRRLLNRATRSNM).

Belongs to the bacterial ribosomal protein bS20 family.

Functionally, binds directly to 16S ribosomal RNA. The protein is Small ribosomal subunit protein bS20 of Rhodopirellula baltica (strain DSM 10527 / NCIMB 13988 / SH1).